Reading from the N-terminus, the 127-residue chain is MNFSGKYQLQSQENFEPFMKAIGLPEDLIQKGKDIKGVSEIVHEGKKIKLTITYGPKVVRNEFTLGEECELETMTGEKVKAVVKLEGDNKMVTTFKGIKSVTELNGDTITNTMTLGDIVYKRVSKRI.

Methionine 1 is subject to N-acetylmethionine. The residue at position 11 (serine 11) is a Phosphoserine. N6-succinyllysine is present on residues lysine 31 and lysine 36. A Phosphoserine modification is found at serine 39. Position 46 is an N6-succinyllysine (lysine 46). Threonine 51 carries the post-translational modification Phosphothreonine. N6-succinyllysine occurs at positions 57 and 78. An N6-acetyllysine; alternate modification is found at lysine 84. Lysine 84 is subject to N6-succinyllysine; alternate. Lysine 90 bears the N6-succinyllysine mark. Serine 100 is modified (phosphoserine). Lysine 121 is modified (N6-succinyllysine).

This sequence belongs to the calycin superfamily. Fatty-acid binding protein (FABP) family.

It is found in the cytoplasm. Functionally, plays a role in lipoprotein-mediated cholesterol uptake in hepatocytes. Binds cholesterol. Binds free fatty acids and their coenzyme A derivatives, bilirubin, and some other small molecules in the cytoplasm. May be involved in intracellular lipid transport. This chain is Fatty acid-binding protein, liver (Fabp1), found in Mus musculus (Mouse).